A 1108-amino-acid chain; its full sequence is DNA-directed RNA polymerase subunit beta (1108 aa).

The tract at residues 1081–1108 is disordered; sequence SPRRTPARPTIDYSALDDTDDKEGATTF.

This sequence belongs to the RNA polymerase beta chain family. As to quaternary structure, in cyanobacteria the RNAP catalytic core is composed of 2 alpha, 1 beta, 1 beta', 1 gamma and 1 omega subunit. When a sigma factor is associated with the core the holoenzyme is formed, which can initiate transcription.

It catalyses the reaction RNA(n) + a ribonucleoside 5'-triphosphate = RNA(n+1) + diphosphate. Its function is as follows. DNA-dependent RNA polymerase catalyzes the transcription of DNA into RNA using the four ribonucleoside triphosphates as substrates. In Thermosynechococcus vestitus (strain NIES-2133 / IAM M-273 / BP-1), this protein is DNA-directed RNA polymerase subunit beta.